A 118-amino-acid chain; its full sequence is UPF0344 protein YisL (118 aa).

4 helical membrane passes run 4-24 (LHIT…SLYS), 33-53 (ITHM…AELF), 62-82 (EYAG…MLLI), and 93-113 (LWVG…HLPI).

The protein belongs to the UPF0344 family.

The protein localises to the cell membrane. The protein is UPF0344 protein YisL (yisL) of Bacillus subtilis (strain 168).